The primary structure comprises 263 residues: Small ribosomal subunit protein eS4 (263 aa).

One can recognise an S4 RNA-binding domain in the interval 42–104; it reads LPLVIFLRNR…TNELFRLIYD (63 aa).

It belongs to the eukaryotic ribosomal protein eS4 family.

This is Small ribosomal subunit protein eS4 (RpS4) from Bombyx mori (Silk moth).